The primary structure comprises 363 residues: Protein RecA (363 aa).

79-86 (GPESSGKT) lines the ATP pocket.

It belongs to the RecA family.

It localises to the cytoplasm. Its function is as follows. Can catalyze the hydrolysis of ATP in the presence of single-stranded DNA, the ATP-dependent uptake of single-stranded DNA by duplex DNA, and the ATP-dependent hybridization of homologous single-stranded DNAs. It interacts with LexA causing its activation and leading to its autocatalytic cleavage. In Methylobacterium sp. (strain 4-46), this protein is Protein RecA.